A 143-amino-acid chain; its full sequence is uncharacterized protein (143 aa).

The active site involves C12.

Belongs to the ArsC family.

This is an uncharacterized protein from Rhodospirillum rubrum.